Reading from the N-terminus, the 466-residue chain is Ribulose bisphosphate carboxylase large chain (466 aa).

K5 bears the N6,N6,N6-trimethyllysine mark. Substrate contacts are provided by N114 and T164. The active-site Proton acceptor is K166. Substrate is bound at residue K168. Residues K192, D194, and E195 each contribute to the Mg(2+) site. The residue at position 192 (K192) is an N6-carboxylysine. Residue H285 is the Proton acceptor of the active site. Positions 286, 318, and 370 each coordinate substrate.

The protein belongs to the RuBisCO large chain family. Type I subfamily. Heterohexadecamer of 8 large chains and 8 small chains; disulfide-linked. The disulfide link is formed within the large subunit homodimers. The cofactor is Mg(2+). In terms of processing, the disulfide bond which can form in the large chain dimeric partners within the hexadecamer appears to be associated with oxidative stress and protein turnover.

It localises to the plastid. Its subcellular location is the chloroplast. The catalysed reaction is 2 (2R)-3-phosphoglycerate + 2 H(+) = D-ribulose 1,5-bisphosphate + CO2 + H2O. It carries out the reaction D-ribulose 1,5-bisphosphate + O2 = 2-phosphoglycolate + (2R)-3-phosphoglycerate + 2 H(+). Functionally, ruBisCO catalyzes two reactions: the carboxylation of D-ribulose 1,5-bisphosphate, the primary event in carbon dioxide fixation, as well as the oxidative fragmentation of the pentose substrate in the photorespiration process. Both reactions occur simultaneously and in competition at the same active site. The polypeptide is Ribulose bisphosphate carboxylase large chain (Drosera capensis (Cape sundew)).